Here is a 310-residue protein sequence, read N- to C-terminus: N-acetyl-gamma-glutamyl-phosphate reductase (310 aa).

The active site involves C117.

Belongs to the NAGSA dehydrogenase family. Type 2 subfamily.

It is found in the cytoplasm. It carries out the reaction N-acetyl-L-glutamate 5-semialdehyde + phosphate + NADP(+) = N-acetyl-L-glutamyl 5-phosphate + NADPH + H(+). It participates in amino-acid biosynthesis; L-arginine biosynthesis; N(2)-acetyl-L-ornithine from L-glutamate: step 3/4. Its function is as follows. Catalyzes the NADPH-dependent reduction of N-acetyl-5-glutamyl phosphate to yield N-acetyl-L-glutamate 5-semialdehyde. This is N-acetyl-gamma-glutamyl-phosphate reductase from Sinorhizobium medicae (strain WSM419) (Ensifer medicae).